We begin with the raw amino-acid sequence, 135 residues long: Large ribosomal subunit protein uL16 (135 aa).

It belongs to the universal ribosomal protein uL16 family. In terms of assembly, part of the 50S ribosomal subunit.

Its function is as follows. Binds 23S rRNA and is also seen to make contacts with the A and possibly P site tRNAs. This is Large ribosomal subunit protein uL16 from Bdellovibrio bacteriovorus (strain ATCC 15356 / DSM 50701 / NCIMB 9529 / HD100).